A 114-amino-acid polypeptide reads, in one-letter code: T cell receptor beta variable 6-4 (114 aa).

Positions 1 to 21 (MSIRLLCCVAFSLLWAGPVTA) are cleaved as a signal peptide. Positions 22-114 (GITQAPTSQI…TSVYFCASSD (93 aa)) constitute an Ig-like domain. Cys-42 and Cys-110 are disulfide-bonded.

As to quaternary structure, alpha-beta TR is a heterodimer composed of an alpha and beta chain; disulfide-linked. The alpha-beta TR is associated with the transmembrane signaling CD3 coreceptor proteins to form the TR-CD3 (TcR or TCR). The assembly of alpha-beta TR heterodimers with CD3 occurs in the endoplasmic reticulum where a single alpha-beta TR heterodimer associates with one CD3D-CD3E heterodimer, one CD3G-CD3E heterodimer and one CD247 homodimer forming a stable octameric structure. CD3D-CD3E and CD3G-CD3E heterodimers preferentially associate with TR alpha and TR beta chains, respectively. The association of the CD247 homodimer is the last step of TcR assembly in the endoplasmic reticulum and is required for transport to the cell surface.

It is found in the cell membrane. In terms of biological role, v region of the variable domain of T cell receptor (TR) beta chain that participates in the antigen recognition. Alpha-beta T cell receptors are antigen specific receptors which are essential to the immune response and are present on the cell surface of T lymphocytes. Recognize peptide-major histocompatibility (MH) (pMH) complexes that are displayed by antigen presenting cells (APC), a prerequisite for efficient T cell adaptive immunity against pathogens. Binding of alpha-beta TR to pMH complex initiates TR-CD3 clustering on the cell surface and intracellular activation of LCK that phosphorylates the ITAM motifs of CD3G, CD3D, CD3E and CD247 enabling the recruitment of ZAP70. In turn ZAP70 phosphorylates LAT, which recruits numerous signaling molecules to form the LAT signalosome. The LAT signalosome propagates signal branching to three major signaling pathways, the calcium, the mitogen-activated protein kinase (MAPK) kinase and the nuclear factor NF-kappa-B (NF-kB) pathways, leading to the mobilization of transcription factors that are critical for gene expression and essential for T cell growth and differentiation. The T cell repertoire is generated in the thymus, by V-(D)-J rearrangement. This repertoire is then shaped by intrathymic selection events to generate a peripheral T cell pool of self-MH restricted, non-autoaggressive T cells. Post-thymic interaction of alpha-beta TR with the pMH complexes shapes TR structural and functional avidity. The sequence is that of T cell receptor beta variable 6-4 from Homo sapiens (Human).